A 347-amino-acid chain; its full sequence is Protein YIPF3 (347 aa).

Positions 1–28 (MATQAAPASGVRNGAGPEWGGFEENIQG) are disordered. Ala-2 is modified (N-acetylalanine). Topologically, residues 2-145 (ATQAAPASGV…PIKMVNFPQK (144 aa)) are cytoplasmic. The helical transmembrane segment at 146–166 (VAGELYGPLMLVFTLVAILLH) threads the bilayer. The Lumenal segment spans residues 167–184 (GMKTSDTIIREGTLMGTA). The helical transmembrane segment at 185–205 (IGTCFGYWLGVSSFIYFLAYL) threads the bilayer. Topologically, residues 206 to 211 (CNAQIT) are cytoplasmic. Residues 212 to 234 (MLQMLALLGYGLFGHCIVLFITY) form a helical membrane-spanning segment. Over 235–237 (NIH) the chain is Lumenal. A helical membrane pass occupies residues 238 to 260 (LHALFYLFWLLLGGLSTLRMVAV). Residues 261-271 (LVSRTVGPTQR) are Cytoplasmic-facing. The chain crosses the membrane as a helical span at residues 272–292 (LLLCGTLAALHMLFLLYLHFA). At 293 to 347 (YHKVVEGILDTLEGPNIPPMQRVPRDIPAVLPAAKLPVAVVNATAKAIAVTLQSH) the chain is on the lumenal side. Asn-334 is a glycosylation site (N-linked (GlcNAc...) asparagine).

The protein belongs to the YIP1 family. As to quaternary structure, interacts with YIPF4 and YIPF5.

The protein resides in the cell membrane. It is found in the golgi apparatus. Its subcellular location is the cis-Golgi network membrane. It localises to the cytoplasm. In terms of biological role, involved in the maintenance of the Golgi structure. May play a role in hematopoiesis. The protein is Protein YIPF3 (Yipf3) of Rattus norvegicus (Rat).